The chain runs to 483 residues: Glutamate mutase epsilon subunit (483 aa).

R66 contributes to the L-glutamate binding site. G68 serves as a coordination point for adenosylcob(III)alamin. R100 serves as a coordination point for L-glutamate. Adenosylcob(III)alamin is bound at residue N123. L-glutamate contacts are provided by residues R149 to H150, E171, and Y177. P180 contacts adenosylcob(III)alamin. Y181 contacts L-glutamate. Residues F297, K326, E330, and I334 each contribute to the adenosylcob(III)alamin site.

This sequence belongs to the methylaspartate mutase GlmE subunit family. In terms of assembly, heterotetramer composed of 2 epsilon subunits (GlmE) and 2 sigma subunits (GlmS). GlmE exists as a homodimer and GlmS as a monomer. Adenosylcob(III)alamin is required as a cofactor.

It carries out the reaction (2S,3S)-3-methyl-L-aspartate = L-glutamate. The protein operates within amino-acid degradation; L-glutamate degradation via mesaconate pathway; acetate and pyruvate from L-glutamate: step 1/4. Its activity is regulated as follows. Competitively inhibited by (2S,4S)-4-fluoroglutamate, 2-methyleneglutarate, (2R,3RS)-3-fluoroglutamate and (S)-3-methylitaconate. In terms of biological role, catalyzes the carbon skeleton rearrangement of L-glutamate to L-threo-3-methylaspartate ((2S,3S)-3-methylaspartate). In Clostridium cochlearium, this protein is Glutamate mutase epsilon subunit.